Here is a 466-residue protein sequence, read N- to C-terminus: 55 kDa erythrocyte membrane protein (466 aa).

Residue Thr-2 is modified to N-acetylthreonine. Ser-13 and Ser-19 each carry phosphoserine. A Phosphothreonine modification is found at Thr-49. Residues Ser-52, Ser-57, and Ser-110 each carry the phosphoserine modification. The PDZ domain occupies 71 to 152; it reads LIQFEKVTEE…MISLKVIPNQ (82 aa). Positions 158–228 constitute an SH3 domain; the sequence is ALQMFMRAQF…PSPELQEWRV (71 aa). Ser-243 carries the phosphoserine modification. The tract at residues 268–466 is interaction with PALS1; sequence VVSYEEVVRL…PQWVPVSWVY (199 aa). The 170-residue stretch at 282-451 folds into the Guanylate kinase-like domain; sequence RKTLVLIGAS…TLKKLQEAFD (170 aa).

This sequence belongs to the MAGUK family. As to quaternary structure, heterodimer with PALS1. Interacts with DLG5 and NF2. Interacts (via guanylate kinase-like domain) with WHRN (via third PDZ domain). Post-translationally, palmitoylated.

It localises to the cell membrane. The protein localises to the cell projection. It is found in the stereocilium. Essential regulator of neutrophil polarity. Regulates neutrophil polarization by regulating AKT1 phosphorylation through a mechanism that is independent of PIK3CG activity. The polypeptide is 55 kDa erythrocyte membrane protein (MPP1) (Pongo abelii (Sumatran orangutan)).